The chain runs to 200 residues: Elongation factor Ts (200 aa).

The interval 81-84 (TDFV) is involved in Mg(2+) ion dislocation from EF-Tu.

Belongs to the EF-Ts family.

It is found in the cytoplasm. Functionally, associates with the EF-Tu.GDP complex and induces the exchange of GDP to GTP. It remains bound to the aminoacyl-tRNA.EF-Tu.GTP complex up to the GTP hydrolysis stage on the ribosome. The sequence is that of Elongation factor Ts from Nitratidesulfovibrio vulgaris (strain DSM 19637 / Miyazaki F) (Desulfovibrio vulgaris).